The chain runs to 230 residues: MAQATPKADSQRGRFITFEGGEGSGKSTQIRILAERLQAAKLRAIVTREPGGSPGAEIIRHLVLSGVGKLLGADAETLLFAAARDDHVHTVIKPALEQGIWVLCDRFADSTRVYQGQLGNVLPGVLNAMERVTIGDLKPDLTVILDVPVEVGLQRAAARRGSGAPDRFEAEDIAFHRKLRDAYRAIAASDPQRCVVIDADADLDAVAARVWAALHDRALTADAATKASRA.

20-27 (GGEGSGKS) lines the ATP pocket.

The protein belongs to the thymidylate kinase family.

The enzyme catalyses dTMP + ATP = dTDP + ADP. Its function is as follows. Phosphorylation of dTMP to form dTDP in both de novo and salvage pathways of dTTP synthesis. In Nitrobacter winogradskyi (strain ATCC 25391 / DSM 10237 / CIP 104748 / NCIMB 11846 / Nb-255), this protein is Thymidylate kinase.